We begin with the raw amino-acid sequence, 477 residues long: PEP-dependent dihydroxyacetone kinase, phosphoryl donor subunit DhaM (477 aa).

Positions 1–135 (MIGLIIVSHS…QALQAKQQQL (135 aa)) constitute a PTS EIIA type-4 domain. Catalysis depends on His-9, which acts as the Tele-phosphohistidine intermediate. One can recognise an HPr domain in the interval 156–243 (ALTTQWVVKN…QLAQHNFGDN (88 aa)). His-170 functions as the Pros-phosphohistidine intermediate in the catalytic mechanism. The segment at 269 to 477 (HAPNTELCIS…IETRSLIVAS (209 aa)) is PTS EI-like, N-terminal part. Catalysis depends on His-435, which acts as the Tele-phosphohistidine intermediate.

It belongs to the PEP-utilizing enzyme family. In terms of assembly, homodimer. The dihydroxyacetone kinase complex is composed of a homodimer of DhaM, a homodimer of DhaK and the subunit DhaL.

The enzyme catalyses dihydroxyacetone + phosphoenolpyruvate = dihydroxyacetone phosphate + pyruvate. Component of the dihydroxyacetone kinase complex, which is responsible for the phosphoenolpyruvate (PEP)-dependent phosphorylation of dihydroxyacetone. DhaM serves as the phosphoryl donor. Is phosphorylated by phosphoenolpyruvate in an EI- and HPr-dependent reaction, and a phosphorelay system on histidine residues finally leads to phosphoryl transfer to DhaL and dihydroxyacetone. The sequence is that of PEP-dependent dihydroxyacetone kinase, phosphoryl donor subunit DhaM from Providencia stuartii (strain MRSN 2154).